A 491-amino-acid chain; its full sequence is Nicotinamide phosphoribosyltransferase (491 aa).

The residue at position 1 (Met-1) is an N-acetylmethionine. Residue Tyr-188 is modified to Phosphotyrosine. Residue Arg-196 coordinates diphosphate. Asp-219 is a beta-nicotinamide D-ribonucleotide binding site. Diphosphate is bound by residues His-247 and Arg-311. Beta-nicotinamide D-ribonucleotide contacts are provided by residues 311–313 (RPD), 353–354 (GD), Gly-384, and Arg-392. Position 472 is a phosphoserine (Ser-472).

The protein belongs to the NAPRTase family. Homodimer. In terms of tissue distribution, expressed in various tissues. At the highest level in liver and at the second highest in heart. The amount is higher in heart than in lung.

The protein resides in the nucleus. It localises to the cytoplasm. Its subcellular location is the secreted. The enzyme catalyses beta-nicotinamide D-ribonucleotide + diphosphate = 5-phospho-alpha-D-ribose 1-diphosphate + nicotinamide + H(+). The protein operates within cofactor biosynthesis; NAD(+) biosynthesis; nicotinamide D-ribonucleotide from 5-phospho-alpha-D-ribose 1-diphosphate and nicotinamide: step 1/1. In terms of biological role, catalyzes the condensation of nicotinamide with 5-phosphoribosyl-1-pyrophosphate to yield nicotinamide mononucleotide, an intermediate in the biosynthesis of NAD. It is the rate limiting component in the mammalian NAD biosynthesis pathway. The secreted form behaves both as a cytokine with immunomodulating properties and an adipokine with anti-diabetic properties, it has no enzymatic activity, partly because of lack of activation by ATP, which has a low level in extracellular space and plasma. Plays a role in the modulation of circadian clock function. NAMPT-dependent oscillatory production of NAD regulates oscillation of clock target gene expression by releasing the core clock component: CLOCK-BMAL1 heterodimer from NAD-dependent SIRT1-mediated suppression. In Rattus norvegicus (Rat), this protein is Nicotinamide phosphoribosyltransferase (Nampt).